The sequence spans 180 residues: Translation initiation factor IF-3 (180 aa).

Belongs to the IF-3 family. In terms of assembly, monomer.

It localises to the cytoplasm. Its function is as follows. IF-3 binds to the 30S ribosomal subunit and shifts the equilibrium between 70S ribosomes and their 50S and 30S subunits in favor of the free subunits, thus enhancing the availability of 30S subunits on which protein synthesis initiation begins. This is Translation initiation factor IF-3 from Hyphomonas neptunium (strain ATCC 15444).